We begin with the raw amino-acid sequence, 473 residues long: Argininosuccinate lyase (473 aa).

Belongs to the lyase 1 family. Argininosuccinate lyase subfamily.

Its subcellular location is the cytoplasm. The enzyme catalyses 2-(N(omega)-L-arginino)succinate = fumarate + L-arginine. Its pathway is amino-acid biosynthesis; L-arginine biosynthesis; L-arginine from L-ornithine and carbamoyl phosphate: step 3/3. The chain is Argininosuccinate lyase from Chelativorans sp. (strain BNC1).